The chain runs to 183 residues: Hypoxanthine-guanine-xanthine phosphoribosyltransferase (183 aa).

Residues 102 to 110 (EDIIDTGLT), K134, and D163 each bind GMP. Catalysis depends on D106, which acts as the Proton acceptor. A Mg(2+)-binding site is contributed by D163.

As to quaternary structure, homodimer. The cofactor is Mg(2+).

The protein resides in the cytoplasm. The catalysed reaction is IMP + diphosphate = hypoxanthine + 5-phospho-alpha-D-ribose 1-diphosphate. The enzyme catalyses GMP + diphosphate = guanine + 5-phospho-alpha-D-ribose 1-diphosphate. It carries out the reaction XMP + diphosphate = xanthine + 5-phospho-alpha-D-ribose 1-diphosphate. It participates in purine metabolism; GMP biosynthesis via salvage pathway; GMP from guanine: step 1/1. The protein operates within purine metabolism; IMP biosynthesis via salvage pathway; IMP from hypoxanthine: step 1/1. Its pathway is purine metabolism; XMP biosynthesis via salvage pathway; XMP from xanthine: step 1/1. Its function is as follows. Essential in nucleic acid metabolism of T.foetus because the parasite is unable to synthesize purine nucleotides de novo and relies on the HGXPRTase activities for its purine requirements by salvaging purine bases from the host. Works with guanine, hypoxanthine and xanthine. In Tritrichomonas foetus (Trichomonas foetus), this protein is Hypoxanthine-guanine-xanthine phosphoribosyltransferase (HPT).